Consider the following 182-residue polypeptide: UPF0301 protein NMC1274 (182 aa).

The protein belongs to the UPF0301 (AlgH) family.

This is UPF0301 protein NMC1274 from Neisseria meningitidis serogroup C / serotype 2a (strain ATCC 700532 / DSM 15464 / FAM18).